The sequence spans 165 residues: Polcalcin Jun o 2 (165 aa).

EF-hand domains lie at glutamine 22–aspartate 57, valine 58–leucine 86, alanine 91–proline 126, and cysteine 127–aspartate 162. Ca(2+)-binding residues include aspartate 35, asparagine 37, aspartate 39, lysine 41, glutamate 46, aspartate 71, aspartate 73, aspartate 75, tyrosine 77, glutamate 82, aspartate 104, aspartate 106, asparagine 108, serine 110, glutamate 115, aspartate 140, asparagine 142, aspartate 144, and glutamate 151.

The chain is Polcalcin Jun o 2 from Juniperus oxycedrus (Prickly juniper).